Here is a 341-residue protein sequence, read N- to C-terminus: Protein-glutamate methylesterase/protein-glutamine glutaminase 2 (341 aa).

Residues 11–126 form the Response regulatory domain; sequence RVLVADDSEL…DLGEYGRLIR (116 aa). 4-aspartylphosphate is present on D62. In terms of domain architecture, CheB-type methylesterase spans 152 to 341; sequence PARAARVEVV…IPRALRELTR (190 aa). Active-site residues include S166, H193, and D285.

Belongs to the CheB family. In terms of processing, phosphorylated by CheA. Phosphorylation of the N-terminal regulatory domain activates the methylesterase activity.

The protein localises to the cytoplasm. It catalyses the reaction [protein]-L-glutamate 5-O-methyl ester + H2O = L-glutamyl-[protein] + methanol + H(+). The enzyme catalyses L-glutaminyl-[protein] + H2O = L-glutamyl-[protein] + NH4(+). Its function is as follows. Involved in chemotaxis. Part of a chemotaxis signal transduction system that modulates chemotaxis in response to various stimuli. Catalyzes the demethylation of specific methylglutamate residues introduced into the chemoreceptors (methyl-accepting chemotaxis proteins or MCP) by CheR. Also mediates the irreversible deamidation of specific glutamine residues to glutamic acid. This chain is Protein-glutamate methylesterase/protein-glutamine glutaminase 2, found in Anaeromyxobacter dehalogenans (strain 2CP-C).